We begin with the raw amino-acid sequence, 473 residues long: Phosphatidylserine synthase 1 (473 aa).

A2 carries the post-translational modification N-acetylalanine. Residues 2-35 (ASCVGSRTLSKDDVNYRMHFRMINEQQVEDITID) lie on the Cytoplasmic side of the membrane. The helical transmembrane segment at 36–56 (FFYRPHTITLLSFTIISLMYF) threads the bilayer. Topologically, residues 57–72 (AFTRDDCVPEDNIWRG) are lumenal. The helical transmembrane segment at 73 to 93 (ILSVIFFFLIISVLAFPNGPF) threads the bilayer. The Cytoplasmic segment spans residues 94-102 (TRPHPALWR). A helical membrane pass occupies residues 103-123 (MVFGLSVLYFLFLVFLLFLNF). At 124–186 (EQVKSLMYWL…AMKALLIRSY (63 aa)) the chain is on the lumenal side. Residues 187-207 (GLCWTISITWELTELFFMHLL) form a helical membrane-spanning segment. The Cytoplasmic segment spans residues 208-216 (PNFAECWWD). A helical transmembrane segment spans residues 217–237 (QVILDILLCNGGGIWLGMVVC). Topologically, residues 238-286 (RFLEMRTYHWASFKDIHTTTGKIKRAVLQFTPASWTYVRWFDPKSSFQR) are lumenal. The chain crosses the membrane as a helical span at residues 287–307 (VAGIYLFMIIWQLTELNTFFL). Residues 308 to 319 (KHIFVFQASHPL) lie on the Cytoplasmic side of the membrane. A helical membrane pass occupies residues 320–342 (SWCRILFIGCITAPTVRQYYAYL). Over 343-355 (TDTQCKRVGTQCW) the chain is Lumenal. The chain crosses the membrane as a helical span at residues 356–376 (VFGVIGFLEAIVCIKFGQDLF). Residues 377–383 (SKTQILY) are Cytoplasmic-facing. The helical transmembrane segment at 384–404 (VVLWLLCVAFTTFLCLYGMVW) threads the bilayer. Residues 405–473 (YAEHYGHREK…SKVTNGVGKK (69 aa)) lie on the Lumenal side of the membrane. Residues S417, S425, S442, and S454 each carry the phosphoserine modification. The interval 430–473 (WYHGKGSKGSEDSPPKHSNNNESHSSRRRNRHSKSKVTNGVGKK) is disordered. A compositionally biased stretch (basic residues) spans 455-464 (SRRRNRHSKS).

It belongs to the phosphatidyl serine synthase family.

It is found in the endoplasmic reticulum membrane. The catalysed reaction is a 1,2-diacyl-sn-glycero-3-phosphoethanolamine + L-serine = a 1,2-diacyl-sn-glycero-3-phospho-L-serine + ethanolamine. The enzyme catalyses a 1,2-diacyl-sn-glycero-3-phosphocholine + L-serine = a 1,2-diacyl-sn-glycero-3-phospho-L-serine + choline. It participates in phospholipid metabolism; phosphatidylserine biosynthesis. In terms of biological role, catalyzes a base-exchange reaction in which the polar head group of phosphatidylethanolamine (PE) or phosphatidylcholine (PC) is replaced by L-serine. Catalyzes mainly the conversion of phosphatidylcholine but also converts, in vitro and to a lesser extent, phosphatidylethanolamine. This Rattus norvegicus (Rat) protein is Phosphatidylserine synthase 1 (Ptdss1).